A 179-amino-acid chain; its full sequence is Large ribosomal subunit protein uL6 (179 aa).

Belongs to the universal ribosomal protein uL6 family. Part of the 50S ribosomal subunit.

Functionally, this protein binds to the 23S rRNA, and is important in its secondary structure. It is located near the subunit interface in the base of the L7/L12 stalk, and near the tRNA binding site of the peptidyltransferase center. The sequence is that of Large ribosomal subunit protein uL6 from Rhodococcus erythropolis (strain PR4 / NBRC 100887).